The sequence spans 34 residues: Photosystem II reaction center protein Psb30 (34 aa).

The chain crosses the membrane as a helical span at residues 6–26 (VIGQLIATGAIMLAGPAVIVL).

This sequence belongs to the Psb30/Ycf12 family. As to quaternary structure, PSII is composed of 1 copy each of membrane proteins PsbA, PsbB, PsbC, PsbD, PsbE, PsbF, PsbH, PsbI, PsbJ, PsbK, PsbL, PsbM, PsbT, PsbX, PsbY, PsbZ, Psb30/Ycf12, peripheral proteins of the oxygen-evolving complex and a large number of cofactors. It forms dimeric complexes.

The protein localises to the plastid. Its subcellular location is the chloroplast thylakoid membrane. A core subunit of photosystem II (PSII), probably helps stabilize the reaction center. This is Photosystem II reaction center protein Psb30 from Trieres chinensis (Marine centric diatom).